Consider the following 196-residue polypeptide: Late protein I196L (196 aa).

Tandem repeats lie at residues 28 to 48 and 49 to 70. A 3; approximate repeat occupies 71–92; that stretch reads SNYLTSAIPNIISDKEDDTPFS.

Belongs to the asfivirus I196L family.

The sequence is that of Late protein I196L from African swine fever virus (strain Badajoz 1971 Vero-adapted) (Ba71V).